Here is a 50-residue protein sequence, read N- to C-terminus: Insulin (50 aa).

3 disulfide bridges follow: cysteine 7–cysteine 36, cysteine 19–cysteine 49, and cysteine 35–cysteine 40.

Belongs to the insulin family. In terms of assembly, heterodimer of a B chain and an A chain linked by two disulfide bonds.

It is found in the secreted. Functionally, insulin decreases blood glucose concentration. It increases cell permeability to monosaccharides, amino acids and fatty acids. It accelerates glycolysis, the pentose phosphate cycle, and glycogen synthesis in liver. The polypeptide is Insulin (ins) (Oncorhynchus gorbuscha (Pink salmon)).